The following is a 437-amino-acid chain: Cytochrome c biogenesis protein Ccs1 (437 aa).

Transmembrane regions (helical) follow at residues 23-43, 82-102, and 168-188; these read LQFS…GTII, TWWF…CSLS, and LAPI…VLGL.

This sequence belongs to the Ccs1/CcsB family. In terms of assembly, may interact with CcsA.

It localises to the plastid. The protein localises to the chloroplast thylakoid membrane. Required during biogenesis of c-type cytochromes (cytochrome c6 and cytochrome f) at the step of heme attachment. This is Cytochrome c biogenesis protein Ccs1 from Porphyra purpurea (Red seaweed).